Here is a 262-residue protein sequence, read N- to C-terminus: tRNA pseudouridine synthase A (262 aa).

Asp56 serves as the catalytic Nucleophile. Position 114 (Tyr114) interacts with substrate.

Belongs to the tRNA pseudouridine synthase TruA family. Homodimer.

It catalyses the reaction uridine(38/39/40) in tRNA = pseudouridine(38/39/40) in tRNA. In terms of biological role, formation of pseudouridine at positions 38, 39 and 40 in the anticodon stem and loop of transfer RNAs. This Lactiplantibacillus plantarum (strain ATCC BAA-793 / NCIMB 8826 / WCFS1) (Lactobacillus plantarum) protein is tRNA pseudouridine synthase A.